Here is a 436-residue protein sequence, read N- to C-terminus: Enolase (436 aa).

Glutamine 163 is a binding site for (2R)-2-phosphoglycerate. Catalysis depends on glutamate 205, which acts as the Proton donor. Residues aspartate 242, glutamate 285, and aspartate 312 each contribute to the Mg(2+) site. Residues lysine 337, arginine 366, serine 367, and lysine 388 each coordinate (2R)-2-phosphoglycerate. Lysine 337 functions as the Proton acceptor in the catalytic mechanism.

The protein belongs to the enolase family. The cofactor is Mg(2+).

The protein resides in the cytoplasm. The protein localises to the secreted. It is found in the cell surface. The enzyme catalyses (2R)-2-phosphoglycerate = phosphoenolpyruvate + H2O. The protein operates within carbohydrate degradation; glycolysis; pyruvate from D-glyceraldehyde 3-phosphate: step 4/5. In terms of biological role, catalyzes the reversible conversion of 2-phosphoglycerate (2-PG) into phosphoenolpyruvate (PEP). It is essential for the degradation of carbohydrates via glycolysis. The sequence is that of Enolase from Solidesulfovibrio magneticus (strain ATCC 700980 / DSM 13731 / RS-1) (Desulfovibrio magneticus).